Consider the following 1177-residue polypeptide: MDVYPPRRQGLPRARSPGGSSRGSPSVSCSRLRQVQSILTQSSKSRPDGILCILGIDSRYNEGCRELANYLLFGLYNQNTSDFEKTGFSEEVLDDVIILIKSDSVHLYCNPVNFRYLLPYVAHWRNLHFHCMTENEYEDEEAAEEFKITSFVDMVRDCSRIGIPYSSQGHLQIFDMFVVEKWPIVQAFALEGIGGDGFFTMKYELQDVSLNLWNVYSKMDPMSLESLLSDDLVAFEHQWTSFFANFDTEIPFLLELSESQAGEPFRSYFSHGMISSHITENSPNRQPFVLFGNHSTRENLNAGNFNFPSEGHLVRSTGPGGSFAKHMVAQCVSPKGPLACSRTYFFGATHVPYLGGDSKLPKKTEQIRLLSQIYAAVIEAVLAGIACYAKTSSLTKAKEVAEQTLGSGLDSFELIPFKAALRSKMTFHIHAVNNQGRIVPLDSEDSLSFVKTACMAVYDIPDLLGGNGCLGSVVFSESFLTSQILVKEKDGTVTTETSSVVLTAAVPRFCSWLVEDNEVKLSEKTQQAVRGDESFLGTYLTGGEGAYLYSSNLQSWPEEGNVHFFSSGLLFSHCRHRSIIISKDHMNSISFYDGDSTSTVAALLIDFKSSLLPHLPVHFHGSSNFLMIALFPKSKIYQAFYSEVFSLWKQQDNSGISLKVIQEDGLSVEQKRLHSSAQKLFSALSQPAGEKRSSLKLLSAKLPELDWFLQHFAISSISQEPVMRTHLPVLLQQAEINTTHRIESDKVIISIVTGLPGCHASELCAFLVTLHKECGRWMVYRQIMDSSECFHAAHFQRYLSSALEAQQNRSARQSAYIRKKTRLLVVLQGYTDVIDVVQALQTHPDSNVKASFTIGAITACVEPMSCYMEHRFLFPKCLDQCSQGLVSNVVFTSHTTEQRHPLLVQLQSLIRAANPAAAFILAENGIVTRNEDIELILSENSFSSPEMLRSRYLMYPGWYEGKLNAGSVYPLMVQICVWFGRPLEKTRFVAKCKAIQSSIKPSPFSGNIYHILGKVKFSDSERTMEVCYNTLANSLSIMPVLEGPTPPPDSKSVSQDSSGQQECYLVFIGCSLKEDSIKDWLRQSAKQKPQRKALKTRGMLTQQEIRSIHVKRHLEPLPAGYFYNGTQFVNFFGDKTDFHPLMDQFMNDYVEEANREIEKYNQELEQQEYHDLFELKP.

Positions 1-27 (MDVYPPRRQGLPRARSPGGSSRGSPSV) are disordered. A compositionally biased stretch (low complexity) spans 11 to 27 (LPRARSPGGSSRGSPSV).

Interacts with ARL3.

Functionally, may act as an effector for ARL3. The chain is Dynein axonemal assembly factor 9 from Homo sapiens (Human).